The sequence spans 574 residues: Putative DNA-directed RNA polymerase subunit alpha-like 1 (574 aa).

The alpha N-terminal domain (alpha-NTD) stretch occupies residues 1–352 (MTNNKNFADW…ELFSLFLQTS (352 aa)). Residues 419 to 574 (PDYDRYNSIT…RERKRGNREF (156 aa)) form an alpha C-terminal domain (alpha-CTD) region. Residues 534–574 (QETLRKEQDEQSSQQQKDQMEKRRWERQNRERERKRGNREF) are disordered. Over residues 551-574 (DQMEKRRWERQNRERERKRGNREF) the composition is skewed to basic and acidic residues.

The protein belongs to the RNA polymerase alpha chain family. As to quaternary structure, in plastids the minimal PEP RNA polymerase catalytic core is composed of four subunits: alpha, beta, beta', and beta''. When a (nuclear-encoded) sigma factor is associated with the core the holoenzyme is formed, which can initiate transcription.

The protein resides in the plastid. It is found in the chloroplast. The enzyme catalyses RNA(n) + a ribonucleoside 5'-triphosphate = RNA(n+1) + diphosphate. In terms of biological role, DNA-dependent RNA polymerase catalyzes the transcription of DNA into RNA using the four ribonucleoside triphosphates as substrates. The polypeptide is Putative DNA-directed RNA polymerase subunit alpha-like 1 (rpoAL1-A) (Pelargonium hortorum (Common geranium)).